The chain runs to 189 residues: dCTP deaminase (189 aa).

DCTP is bound by residues 112–117 (KSTYAR), 136–138 (TLE), Q157, Y171, and Q181. E138 (proton donor/acceptor) is an active-site residue.

It belongs to the dCTP deaminase family. Homotrimer.

It catalyses the reaction dCTP + H2O + H(+) = dUTP + NH4(+). Its pathway is pyrimidine metabolism; dUMP biosynthesis; dUMP from dCTP (dUTP route): step 1/2. Its function is as follows. Catalyzes the deamination of dCTP to dUTP. The protein is dCTP deaminase of Nitrosospira multiformis (strain ATCC 25196 / NCIMB 11849 / C 71).